A 195-amino-acid chain; its full sequence is MARSYELTRTTGETDISLRLNLDGEGKADIETGVPFMEHMLDLFAKHGQFDLFVKASGDIEVDAHHTTEDLGICIGQAVKEALGTKEGIKRYGNAFVPMDETLAQVVVDLSNRPHLEFRADFPSQKVGTFDTELVHEFFWKLALEARMNLHIIVHYGHNTHHIIEAIFKACARALDEATAIDPRIKGILSTKGLL.

Belongs to the imidazoleglycerol-phosphate dehydratase family.

The protein resides in the cytoplasm. It carries out the reaction D-erythro-1-(imidazol-4-yl)glycerol 3-phosphate = 3-(imidazol-4-yl)-2-oxopropyl phosphate + H2O. The protein operates within amino-acid biosynthesis; L-histidine biosynthesis; L-histidine from 5-phospho-alpha-D-ribose 1-diphosphate: step 6/9. The sequence is that of Imidazoleglycerol-phosphate dehydratase from Shouchella clausii (strain KSM-K16) (Alkalihalobacillus clausii).